Reading from the N-terminus, the 374-residue chain is uncharacterized protein (374 aa).

Residue glycine 29–serine 36 participates in ATP binding.

The protein belongs to the archaeal ATPase family.

This is an uncharacterized protein from Methanocaldococcus jannaschii (strain ATCC 43067 / DSM 2661 / JAL-1 / JCM 10045 / NBRC 100440) (Methanococcus jannaschii).